The following is a 953-amino-acid chain: E3 ubiquitin-protein ligase ZNF598 (953 aa).

The segment covering 25-39 (KPSKSTRIKPTKPHH) has biased composition (basic residues). The disordered stretch occupies residues 25-47 (KPSKSTRIKPTKPHHTPSNSMES). Residues 57-97 (CVLCCQDIDLFAVGKCDHPVCYRCSTKMRVLCEQKYCAVCR) form an RING-type zinc finger. The C2H2-type zinc finger occupies 215–238 (PLCKFCDDRYLDNDELLKHLRRDH). Disordered regions lie at residues 299–779 (SKNR…EDSS) and 884–911 (EKQQ…SSLD). Positions 371 to 380 (AAAMRASMAS) are enriched in low complexity. Residues 381–409 (HQEERSHAQERSMLKPRREEKLEPDETRN) are compositionally biased toward basic and acidic residues. Composition is skewed to polar residues over residues 410-431 (NRST…NGSL) and 467-483 (LSGS…YTNQ). A Phosphoserine modification is found at Ser489. 2 stretches are compositionally biased toward low complexity: residues 508-518 (QSSAASAWSQA) and 536-553 (MTPM…PLPS). Composition is skewed to polar residues over residues 555–564 (SVPQPLTASS) and 641–650 (LGSPSHTPET). The segment covering 655 to 666 (AHKENVPEKKPP) has biased composition (basic and acidic residues). Residues 695–711 (SCTSFPENITSSKQPVT) are compositionally biased toward polar residues. Residues 747–765 (LPPPPPPGLGPAVSKPPPG) are compositionally biased toward pro residues. Polar residues predominate over residues 770–779 (PLNSNVEDSS).

This sequence belongs to the ZNF598/HEL2 family.

It is found in the cytoplasm. Its subcellular location is the cytosol. It carries out the reaction S-ubiquitinyl-[E2 ubiquitin-conjugating enzyme]-L-cysteine + [acceptor protein]-L-lysine = [E2 ubiquitin-conjugating enzyme]-L-cysteine + N(6)-ubiquitinyl-[acceptor protein]-L-lysine.. It functions in the pathway protein modification; protein ubiquitination. Its function is as follows. E3 ubiquitin-protein ligase that plays a key role in the ribosome quality control (RQC), a pathway that takes place when a ribosome has stalled during translation, leading to degradation of nascent peptide chains. ZNF598 is activated when ribosomes are stalled within an mRNA following translation of prematurely polyadenylated mRNAs. Acts as a ribosome collision sensor: specifically recognizes and binds collided di-ribosome, which arises when a trailing ribosome encounters a slower leading ribosome, leading to terminally arrest translation. Following binding to colliding ribosomes, mediates monoubiquitination of 40S ribosomal proteins RPS10/eS10 and RPS3/uS3, and 'Lys-63'-linked polyubiquitination of RPS20/uS10. Polyubiquitination of RPS20/uS10 promotes recruitment of the RQT (ribosome quality control trigger) complex, which drives the disassembly of stalled ribosomes, followed by degradation of nascent peptides. In Danio rerio (Zebrafish), this protein is E3 ubiquitin-protein ligase ZNF598.